The sequence spans 319 residues: Large ribosomal subunit protein uL10 (319 aa).

The segment at 289-319 (EQKSAAPAAKEEAPKEDSEESDEDMGFGLFD) is disordered.

This sequence belongs to the universal ribosomal protein uL10 family. As to quaternary structure, P0 forms a pentameric complex by interaction with dimers of P1 and P2. Post-translationally, phosphorylated.

The protein resides in the nucleus. It localises to the cytoplasm. Functionally, ribosomal protein P0 is the functional equivalent of E.coli protein L10. This is Large ribosomal subunit protein uL10 (rplp0) from Danio rerio (Zebrafish).